The primary structure comprises 404 residues: Keratin, type I microfibrillar, 47.6 kDa (404 aa).

The interval 1–56 (MSFNFCLPNLSFRSSCSSRPCVPSSCCGTTLPGACNIPASVGSCNWFCEGSFNGNE) is head. The region spanning 56–367 (EKETMQFLND…GLLDSEDCKL (312 aa)) is the IF rod domain. Positions 57 to 91 (KETMQFLNDRLASYLEKVRQLERENAELERRILER) are coil 1A. The tract at residues 92-102 (SQQQEPLVCPN) is linker 1. Residues 103–203 (YQSYFRTIEE…HEQEVNTLRS (101 aa)) form a coil 1B region. Positions 204-219 (QLGDRLNVEVDAAPTV) are linker 12. Residues 220 to 363 (DLNHVLNETR…NTYRGLLDSE (144 aa)) are coil 2. Positions 364-404 (DCKLPCNPCATTNTCGKPIGPCISNPCVSRTRCGPCNTFVH) are tail.

This sequence belongs to the intermediate filament family.

Wool microfibrillar keratin. The chain is Keratin, type I microfibrillar, 47.6 kDa from Ovis aries (Sheep).